Reading from the N-terminus, the 159-residue chain is Endoribonuclease YbeY (159 aa).

His119, His123, and His129 together coordinate Zn(2+).

The protein belongs to the endoribonuclease YbeY family. Zn(2+) is required as a cofactor.

It localises to the cytoplasm. Functionally, single strand-specific metallo-endoribonuclease involved in late-stage 70S ribosome quality control and in maturation of the 3' terminus of the 16S rRNA. This is Endoribonuclease YbeY from Acinetobacter baylyi (strain ATCC 33305 / BD413 / ADP1).